The sequence spans 501 residues: Aldehyde dehydrogenase 1A1 (501 aa).

At Ser2 the chain carries N-acetylserine. Residues Lys91 and Lys128 each carry the N6-acetyllysine modification. Residues 167–170, 193–196, 226–227, and 246–247 contribute to the NAD(+) site; these read IPWN, KPAE, GP, and GS. N6-acetyllysine is present on Lys252. The Proton acceptor role is filled by Glu269. 269-271 contacts NAD(+); the sequence is ELG. The active-site Nucleophile is the Cys303. The tract at residues 336-501 is mediates interaction with PRMT3; sequence LNSGINQGPQ…VAIKISQKNS (166 aa). Residue 349–353 participates in NAD(+) binding; that stretch reads EQHDK. Residues Lys353 and Lys367 each carry the N6-acetyllysine modification. Residue 400 to 402 coordinates NAD(+); it reads EIF. At Lys410 the chain carries N6-acetyllysine. Residue Ser413 is modified to Phosphoserine. N6-acetyllysine occurs at positions 419, 435, and 495.

It belongs to the aldehyde dehydrogenase family. In terms of assembly, homotetramer. Interacts with PRMT3; the interaction is direct, inhibits ALDH1A1 aldehyde dehydrogenase activity and is independent of the methyltransferase activity of PRMT3. In terms of processing, the N-terminus is blocked most probably by acetylation.

Its subcellular location is the cytoplasm. The protein resides in the cytosol. The protein localises to the cell projection. It localises to the axon. The catalysed reaction is an aldehyde + NAD(+) + H2O = a carboxylate + NADH + 2 H(+). The enzyme catalyses all-trans-retinal + NAD(+) + H2O = all-trans-retinoate + NADH + 2 H(+). It carries out the reaction 9-cis-retinal + NAD(+) + H2O = 9-cis-retinoate + NADH + 2 H(+). It catalyses the reaction 11-cis-retinal + NAD(+) + H2O = 11-cis-retinoate + NADH + 2 H(+). The catalysed reaction is 13-cis-retinal + NAD(+) + H2O = 13-cis-retinoate + NADH + 2 H(+). The enzyme catalyses 3-deoxyglucosone + NAD(+) + H2O = 2-dehydro-3-deoxy-D-gluconate + NADH + 2 H(+). It carries out the reaction (E)-4-hydroxynon-2-enal + NAD(+) + H2O = (E)-4-hydroxynon-2-enoate + NADH + 2 H(+). It catalyses the reaction malonaldehyde + NAD(+) + H2O = 3-oxopropanoate + NADH + 2 H(+). The catalysed reaction is hexanal + NAD(+) + H2O = hexanoate + NADH + 2 H(+). The enzyme catalyses propanal + NAD(+) + H2O = propanoate + NADH + 2 H(+). It carries out the reaction acetaldehyde + NAD(+) + H2O = acetate + NADH + 2 H(+). It catalyses the reaction benzaldehyde + NAD(+) + H2O = benzoate + NADH + 2 H(+). The catalysed reaction is 4-aminobutanal + NAD(+) + H2O = 4-aminobutanoate + NADH + 2 H(+). It participates in cofactor metabolism; retinol metabolism. Its function is as follows. Cytosolic dehydrogenase that catalyzes the irreversible oxidation of a wide range of aldehydes to their corresponding carboxylic acid. Functions downstream of retinol dehydrogenases and catalyzes the oxidation of retinaldehyde into retinoic acid, the second step in the oxidation of retinol/vitamin A into retinoic acid. This pathway is crucial to control the levels of retinol and retinoic acid, two important molecules which excess can be teratogenic and cytotoxic. Also oxidizes aldehydes resulting from lipid peroxidation like (E)-4-hydroxynon-2-enal/HNE, malonaldehyde and hexanal that form protein adducts and are highly cytotoxic. By participating for instance to the clearance of (E)-4-hydroxynon-2-enal/HNE in the lens epithelium prevents the formation of HNE-protein adducts and lens opacification. Also functions downstream of fructosamine-3-kinase in the fructosamine degradation pathway by catalyzing the oxidation of 3-deoxyglucosone, the carbohydrate product of fructosamine 3-phosphate decomposition, which is itself a potent glycating agent that may react with lysine and arginine side-chains of proteins. Also has an aminobutyraldehyde dehydrogenase activity and is probably part of an alternative pathway for the biosynthesis of GABA/4-aminobutanoate in midbrain, thereby playing a role in GABAergic synaptic transmission. This chain is Aldehyde dehydrogenase 1A1, found in Mesocricetus auratus (Golden hamster).